A 471-amino-acid chain; its full sequence is 4-aminobutyrate aminotransferase (471 aa).

135 to 136 (GA) is a pyridoxal 5'-phosphate binding site. Arg-192 contacts substrate. The residue at position 326 (Lys-326) is an N6-(pyridoxal phosphate)lysine. Residue Thr-351 participates in pyridoxal 5'-phosphate binding.

It belongs to the class-III pyridoxal-phosphate-dependent aminotransferase family. Homodimer and homotetramer. Pyridoxal 5'-phosphate is required as a cofactor.

It is found in the cytoplasm. It carries out the reaction 4-aminobutanoate + 2-oxoglutarate = succinate semialdehyde + L-glutamate. Functionally, required for the degradation of gamma-aminobutyric acid (GABA), which is important for utilization of GABA as nitrogen source and for oxidative stress tolerance. Deaminates GABA to succinate semialdehyde, which in turn is converted to succinate by the succinate-semialdehyde dehydrogenase UGA2. Cannot transaminate beta-alanine (BAL). This is 4-aminobutyrate aminotransferase (UGA1) from Saccharomyces cerevisiae (strain ATCC 204508 / S288c) (Baker's yeast).